Here is a 383-residue protein sequence, read N- to C-terminus: Cytochrome b (383 aa).

The next 4 membrane-spanning stretches (helical) occupy residues 31–51 (FGSL…FLAM), 75–97 (WLMR…VHIF), 112–132 (LWCS…MGYV), and 178–198 (FFSL…IHLI). The heme b site is built by His81 and His95. Heme b-binding residues include His182 and His196. Residue His201 participates in a ubiquinone binding. 4 helical membrane passes run 224–244 (FYTK…IFIF), 288–308 (IGGV…PFTN), 320–340 (IFKV…WVGQ), and 347–367 (YTEI…IIIP).

This sequence belongs to the cytochrome b family. Fungal cytochrome b-c1 complex contains 10 subunits; 3 respiratory subunits, 2 core proteins and 5 low-molecular weight proteins. Cytochrome b-c1 complex is a homodimer. It depends on heme b as a cofactor.

The protein resides in the mitochondrion inner membrane. In terms of biological role, component of the ubiquinol-cytochrome c reductase complex (complex III or cytochrome b-c1 complex) that is part of the mitochondrial respiratory chain. The b-c1 complex mediates electron transfer from ubiquinol to cytochrome c. Contributes to the generation of a proton gradient across the mitochondrial membrane that is then used for ATP synthesis. The chain is Cytochrome b (cob) from Phytophthora megasperma (Potato pink rot fungus).